Consider the following 458-residue polypeptide: ATP synthase subunit beta (458 aa).

148–155 is a binding site for ATP; the sequence is GGAGVGKT.

The protein belongs to the ATPase alpha/beta chains family. As to quaternary structure, F-type ATPases have 2 components, CF(1) - the catalytic core - and CF(0) - the membrane proton channel. CF(1) has five subunits: alpha(3), beta(3), gamma(1), delta(1), epsilon(1). CF(0) has three main subunits: a(1), b(2) and c(9-12). The alpha and beta chains form an alternating ring which encloses part of the gamma chain. CF(1) is attached to CF(0) by a central stalk formed by the gamma and epsilon chains, while a peripheral stalk is formed by the delta and b chains.

It is found in the cell inner membrane. It catalyses the reaction ATP + H2O + 4 H(+)(in) = ADP + phosphate + 5 H(+)(out). Functionally, produces ATP from ADP in the presence of a proton gradient across the membrane. The catalytic sites are hosted primarily by the beta subunits. This Francisella tularensis subsp. holarctica (strain FTNF002-00 / FTA) protein is ATP synthase subunit beta.